The sequence spans 238 residues: Pyridoxine 5'-phosphate synthase (238 aa).

N7 lines the 3-amino-2-oxopropyl phosphate pocket. Residue 9–10 (DH) coordinates 1-deoxy-D-xylulose 5-phosphate. R18 lines the 3-amino-2-oxopropyl phosphate pocket. Residue H43 is the Proton acceptor of the active site. The 1-deoxy-D-xylulose 5-phosphate site is built by R45 and H50. The Proton acceptor role is filled by E70. Position 100 (T100) interacts with 1-deoxy-D-xylulose 5-phosphate. Catalysis depends on H190, which acts as the Proton donor. 3-amino-2-oxopropyl phosphate is bound by residues G191 and 212 to 213 (GH).

The protein belongs to the PNP synthase family. As to quaternary structure, homooctamer; tetramer of dimers.

It is found in the cytoplasm. The catalysed reaction is 3-amino-2-oxopropyl phosphate + 1-deoxy-D-xylulose 5-phosphate = pyridoxine 5'-phosphate + phosphate + 2 H2O + H(+). It participates in cofactor biosynthesis; pyridoxine 5'-phosphate biosynthesis; pyridoxine 5'-phosphate from D-erythrose 4-phosphate: step 5/5. In terms of biological role, catalyzes the complicated ring closure reaction between the two acyclic compounds 1-deoxy-D-xylulose-5-phosphate (DXP) and 3-amino-2-oxopropyl phosphate (1-amino-acetone-3-phosphate or AAP) to form pyridoxine 5'-phosphate (PNP) and inorganic phosphate. In Prochlorococcus marinus (strain AS9601), this protein is Pyridoxine 5'-phosphate synthase.